Reading from the N-terminus, the 405-residue chain is MERQISYRSLSKIPGLFSLLLAATLSRLAGRMFVLTLVLFALARFSSPVLAGWLTFAAIVPGLIVSPLAGVLLDCVGPTIAVRIDMIASTAFITAISLAGWLGWSSPPVVCTLAMLFSLAGPLGIAGIRTLLPRLVPPHALDQANALDTAVYSIVDVVGPAMAGGLVGWLGPEAAMSLIAAACAGAAVCLSQVQRLPGLASSRTSLLRQAIKGIYVVVRQPTLRGLAVSQSLYQMTWGALHVVIPVFVAGNYTVAAGSTVVGLLWALVGIAGGVGALLAGHLCTTGRERHIMTAGMAVTAFATWPIAAEFGFRGLTIGLLLAGAMSGPIDVAMLTLRQRRTNPRQLGRVMSISISVNQAGFPLGAAIAGVVITESLSAIFVLAGITSVLAAIATLSIPPDATPVA.

Helical transmembrane passes span 32–52 (MFVL…VLAG), 53–73 (WLTF…GVLL), 84–104 (IDMI…WLGW), 108–128 (PVVC…IAGI), 150–170 (AVYS…VGWL), 171–191 (GPEA…VCLS), 237–257 (WGAL…VAAG), 260–280 (VVGL…LLAG), 291–311 (IMTA…AEFG), 314–334 (GLTI…VAML), 352–372 (ISIS…GVVI), and 378–398 (AIFV…LSIP).

Belongs to the major facilitator superfamily.

The protein localises to the cell membrane. This is an uncharacterized protein from Sinorhizobium fredii (strain NBRC 101917 / NGR234).